A 64-amino-acid polypeptide reads, in one-letter code: Large ribosomal subunit protein uL30 (64 aa).

In terms of assembly, part of the 50S ribosomal subunit. The protein is methylated on either Ala-2 or Lys-3.

This chain is Large ribosomal subunit protein uL30, found in Rhodopseudomonas palustris (strain ATCC BAA-98 / CGA009).